The chain runs to 414 residues: Peptide chain release factor subunit 1 (414 aa).

It belongs to the eukaryotic release factor 1 family. In terms of assembly, heterodimer of two subunits, one of which binds GTP.

Its subcellular location is the cytoplasm. Directs the termination of nascent peptide synthesis (translation) in response to the termination codons UAA, UAG and UGA. This is Peptide chain release factor subunit 1 (prf1) from Pyrococcus abyssi (strain GE5 / Orsay).